The chain runs to 292 residues: ATP synthase gamma chain (292 aa).

Belongs to the ATPase gamma chain family. In terms of assembly, F-type ATPases have 2 components, CF(1) - the catalytic core - and CF(0) - the membrane proton channel. CF(1) has five subunits: alpha(3), beta(3), gamma(1), delta(1), epsilon(1). CF(0) has three main subunits: a, b and c.

It is found in the cell inner membrane. Produces ATP from ADP in the presence of a proton gradient across the membrane. The gamma chain is believed to be important in regulating ATPase activity and the flow of protons through the CF(0) complex. This Chlorobaculum tepidum (strain ATCC 49652 / DSM 12025 / NBRC 103806 / TLS) (Chlorobium tepidum) protein is ATP synthase gamma chain.